The sequence spans 336 residues: Terephthalate 1,2-dioxygenase, reductase component 1 (336 aa).

The region spanning 3-91 (HQIHIHDSDI…DIRIQPSSFR (89 aa)) is the 2Fe-2S ferredoxin-type domain. 4 residues coordinate [2Fe-2S] cluster: C37, C42, C45, and C75. The 100-residue stretch at 98–197 (RKRFTAKVYS…ELPFGSIALK (100 aa)) folds into the FAD-binding FR-type domain.

In terms of assembly, monomer. Part of a multicomponent enzyme system composed of a reductase (TphA1I or TphA1II) and a two-subunit oxygenase component (TphA2I or TphA2II and TphA3I or TphA3II). FAD is required as a cofactor. The cofactor is [2Fe-2S] cluster.

The catalysed reaction is terephthalate + NADH + O2 + H(+) = (3S,4R)-3,4-dihydroxycyclohexa-1,5-diene-1,4-dicarboxylate + NAD(+). Functionally, component of the terephthalate 1,2-dioxygenase multicomponent enzyme system which catalyzes the dioxygenation of terephthalate (TER/TPA) to 1,2-dihydroxy-3,5-cyclohexadiene-1,4-dicarboxylic acid (DCD). TphA1 probably reduces TphA2A3. It can also use 2,5-dicarboxypyridine (PDC) and 1,4-napthalenedicarboxylic acid (NDC) as substrates, and preferentially uses NADPH which is the physiological electron donor. This is Terephthalate 1,2-dioxygenase, reductase component 1 (tphA1I) from Comamonas sp.